The chain runs to 308 residues: 4-hydroxyproline 2-epimerase (308 aa).

The active-site Proton acceptor is the Cys-88. Substrate is bound by residues 89–90 (GH), His-208, and Asp-232. Residue Cys-236 is the Proton donor of the active site. 237–238 (GT) serves as a coordination point for substrate.

Belongs to the proline racemase family.

It catalyses the reaction trans-4-hydroxy-L-proline = cis-4-hydroxy-D-proline. Functionally, catalyzes the epimerization of trans-4-hydroxy-L-proline (t4LHyp) to cis-4-hydroxy-D-proline (c4DHyp). Is likely involved in a degradation pathway that converts t4LHyp to alpha-ketoglutarate. Can also catalyze the epimerization of trans-3-hydroxy-L-proline (t3LHyp) to cis-3-hydroxy-D-proline (c3DHyp), albeit with 19-fold lower efficiency. Displays no proline racemase activity. This is 4-hydroxyproline 2-epimerase from Chromobacterium violaceum (strain ATCC 12472 / DSM 30191 / JCM 1249 / CCUG 213 / NBRC 12614 / NCIMB 9131 / NCTC 9757 / MK).